We begin with the raw amino-acid sequence, 292 residues long: Glutamate racemase (292 aa).

Substrate is bound by residues 28–29 (DS) and 60–61 (YG). The Proton donor/acceptor role is filled by Cys91. Residue 92-93 (NT) participates in substrate binding. Cys200 functions as the Proton donor/acceptor in the catalytic mechanism. 201-202 (TH) contributes to the substrate binding site.

Belongs to the aspartate/glutamate racemases family.

It catalyses the reaction L-glutamate = D-glutamate. It participates in cell wall biogenesis; peptidoglycan biosynthesis. In terms of biological role, provides the (R)-glutamate required for cell wall biosynthesis. This Trichormus variabilis (strain ATCC 29413 / PCC 7937) (Anabaena variabilis) protein is Glutamate racemase.